Here is a 444-residue protein sequence, read N- to C-terminus: Tubulin beta chain (444 aa).

The GTP site is built by glutamine 11, glutamate 69, serine 138, glycine 142, threonine 143, glycine 144, asparagine 204, and asparagine 226. Glutamate 69 contributes to the Mg(2+) binding site. Residues 423–444 (QQYQDATAEEEGEFDDEEEMDV) form a disordered region. Residues 429–444 (TAEEEGEFDDEEEMDV) are compositionally biased toward acidic residues.

The protein belongs to the tubulin family. In terms of assembly, dimer of alpha and beta chains. A typical microtubule is a hollow water-filled tube with an outer diameter of 25 nm and an inner diameter of 15 nM. Alpha-beta heterodimers associate head-to-tail to form protofilaments running lengthwise along the microtubule wall with the beta-tubulin subunit facing the microtubule plus end conferring a structural polarity. Microtubules usually have 13 protofilaments but different protofilament numbers can be found in some organisms and specialized cells. Requires Mg(2+) as cofactor.

The protein localises to the cytoplasm. It is found in the cytoskeleton. In terms of biological role, tubulin is the major constituent of microtubules, a cylinder consisting of laterally associated linear protofilaments composed of alpha- and beta-tubulin heterodimers. Microtubules grow by the addition of GTP-tubulin dimers to the microtubule end, where a stabilizing cap forms. Below the cap, tubulin dimers are in GDP-bound state, owing to GTPase activity of alpha-tubulin. The protein is Tubulin beta chain of Euplotes focardii.